Reading from the N-terminus, the 414-residue chain is Stork-head box protein ham-1 (414 aa).

Residues 1-31 are essential for association with cell cortex; it reads MTYLAVVLNGPKAKNGRKVFDSFLEQNRQMF. One can recognise a Winged helix Storkhead-box1 domain in the interval 93–170; that stretch reads QQVEQMHFVP…MADHYFVSVP (78 aa). The interval 282 to 362 is disordered; sequence ECQRKARRRN…SNEEAGSISD (81 aa). A bi-partite nuclear localization signal region spans residues 285-295; sequence RKARRRNHPRR. A nuclear localization signal region spans residues 321–327; that stretch reads PTRRRAR. A compositionally biased stretch (polar residues) spans 332-351; it reads LRSSTPNNSDSAYSISPPHT.

It localises to the cytoplasm. The protein resides in the cell cortex. It is found in the nucleus. In terms of biological role, probable transcription factor. Required for asymmetric cell division in neuroblasts, perhaps acting by regulating spindle positioning and myosin polarization, and thus the position of the cleavage plane. Required to produce daughter cell size asymmetry in neuroblasts undergoing asymmetric cell division, usually giving rise to one precursor cell and one apoptotic cell. Positively modulates expression of the serine/threonine kinase pig-1/MELK during asymmetric division of the Q.a neuroblast. Plays a role in neural fate specification in several dopaminergic lineages, including the hermaphrodite-specific neuron (HSN)/phasmid neuron (PHB), acting in concert with the kinase, ham-1, and the T-box protein tbx-2 and the homeobox protein egl-5. The protein is Stork-head box protein ham-1 of Caenorhabditis elegans.